A 308-amino-acid chain; its full sequence is Ribonuclease Z (308 aa).

Residues histidine 61, histidine 63, aspartate 65, histidine 66, histidine 142, aspartate 211, and histidine 270 each contribute to the Zn(2+) site. Aspartate 65 (proton acceptor) is an active-site residue.

The protein belongs to the RNase Z family. In terms of assembly, homodimer. The cofactor is Zn(2+).

It carries out the reaction Endonucleolytic cleavage of RNA, removing extra 3' nucleotides from tRNA precursor, generating 3' termini of tRNAs. A 3'-hydroxy group is left at the tRNA terminus and a 5'-phosphoryl group is left at the trailer molecule.. Zinc phosphodiesterase, which displays some tRNA 3'-processing endonuclease activity. Probably involved in tRNA maturation, by removing a 3'-trailer from precursor tRNA. This chain is Ribonuclease Z, found in Clostridium beijerinckii (strain ATCC 51743 / NCIMB 8052) (Clostridium acetobutylicum).